We begin with the raw amino-acid sequence, 224 residues long: Cytosolic-abundant heat soluble protein 77580 (224 aa).

Residues 1 to 13 (MSNYQQESSYQYS) show a composition bias toward low complexity. A disordered region spans residues 1 to 38 (MSNYQQESSYQYSDRSNNGQQQEQQEKKEVEHSSYTHT). Residues 24-38 (QQEKKEVEHSSYTHT) show a composition bias toward basic and acidic residues. A coiled-coil region spans residues 83-191 (VIDTEAETEE…KRVLERSKFH (109 aa)). CAHS motif regions lie at residues 122–140 (YRKQ…LEKQ) and 159–177 (QKRQ…LERE). Residues 200–215 (AAAGSTHSGSSSVAVS) show a composition bias toward low complexity. Positions 200–224 (AAAGSTHSGSSSVAVSESEKFQTNN) are disordered.

This sequence belongs to the Cytosolic-abundant heat soluble protein (CAHS) family.

It is found in the cytoplasm. In terms of biological role, CAHS proteins are cytosolic heat soluble proteins that seem to contribute to the anhydrobiosis in tardigrades, but their specific mechanisms are yet to be identified. It is possible that protection during anhydrobiosis might occur via the stabilization of vitrifying small molecules such as sugars, but not via the direct glass transition of CAHS proteins themselves. The polypeptide is Cytosolic-abundant heat soluble protein 77580 (Hypsibius exemplaris (Freshwater tardigrade)).